The sequence spans 271 residues: Coiled-coil domain-containing protein ORF29 (271 aa).

A disordered region spans residues Met1 to Ser39. Over residues Ile20–Asp37 the composition is skewed to basic and acidic residues. Residues Arg208 to Glu228 are a coiled coil.

The protein is Coiled-coil domain-containing protein ORF29 of Helicobacter pylori (strain 35A).